A 202-amino-acid polypeptide reads, in one-letter code: Na(+)-translocating NADH-quinone reductase subunit E (202 aa).

6 helical membrane-spanning segments follow: residues 11-31 (AVFV…FIAI), 35-55 (VETA…TMPV), 79-99 (LSFL…QILE), 114-134 (GVFL…LFMV), 144-164 (TVYG…LAGI), and 180-200 (LGIT…FSGV).

This sequence belongs to the NqrDE/RnfAE family. In terms of assembly, composed of six subunits; NqrA, NqrB, NqrC, NqrD, NqrE and NqrF.

The protein resides in the cell inner membrane. It carries out the reaction a ubiquinone + n Na(+)(in) + NADH + H(+) = a ubiquinol + n Na(+)(out) + NAD(+). Functionally, NQR complex catalyzes the reduction of ubiquinone-1 to ubiquinol by two successive reactions, coupled with the transport of Na(+) ions from the cytoplasm to the periplasm. NqrA to NqrE are probably involved in the second step, the conversion of ubisemiquinone to ubiquinol. The chain is Na(+)-translocating NADH-quinone reductase subunit E from Ectopseudomonas mendocina (strain ymp) (Pseudomonas mendocina).